Consider the following 570-residue polypeptide: MITIEREAMEFDVVIVGAGPAGLSAAIKIRQLAIENNLPDLSVCVVEKGSEVGAHILSGAVLEPRAINELFPNWKEEGAPLNVPVTEDKTYFLMSDEKSQEAPHWMVPKTMHNDGNYVISLGNVVRWLGQKAEELEVSIFPGFAAAEILYHADGTVKGIQTGDMGIGKDGEPTHNFAPGYELHAKYTLFAEGCRGHLGKRLINKFNLDQDADPQHYGIGIKELWEIDPAKHKPGLVMHGSGWPLSETGSSGGWWLYHAENNQVTLGMIVDLSYENPHMFPFMEMQRWKTHPLIKQYLEGGKRISYGARAVVKGGLNSLPKLTFPGGCLIGDDAGFLNFAKIKGSHTAMKSGMLCGEAVFEAIARGVDKGGDLAIARVVEGEDLFDKELTTYTQKFDKSWLKEELHRSRNFGPAMHKFGLWIGGAFNFVDQNIFKVPFTLHDLQPDYSALKTQDQATFKPNYPKPDGKLTFDRLSSVFVSNTVHEENQPSHLKLTDASIPVAVNLPRWDEPAQRYCPAGVYEIVDEGEGNKRFQINAANCVHCKTCDIKDPSQNITWVTPEGGGGPNYPNM.

Val13–Ile27 contacts FAD. Positions 515, 539, 542, and 545 each coordinate [4Fe-4S] cluster. Residues Lys530–Pro559 form the 4Fe-4S ferredoxin-type domain.

Requires [4Fe-4S] cluster as cofactor. FAD serves as cofactor.

It catalyses the reaction a ubiquinone + reduced [electron-transfer flavoprotein] = a ubiquinol + oxidized [electron-transfer flavoprotein] + H(+). Functionally, accepts electrons from ETF and reduces ubiquinone. The chain is Probable electron transfer flavoprotein-ubiquinone oxidoreductase (etfD) from Acinetobacter baylyi (strain ATCC 33305 / BD413 / ADP1).